A 399-amino-acid chain; its full sequence is Elongation factor Tu (399 aa).

The tr-type G domain occupies 10–204 (KPHVNIGTIG…AVDASIPEPE (195 aa)). The segment at 19-26 (GHVDHGKT) is G1. Position 19-26 (19-26 (GHVDHGKT)) interacts with GTP. Thr26 is a binding site for Mg(2+). The G2 stretch occupies residues 60–64 (GITIN). A G3 region spans residues 81–84 (DCPG). Residues 81–85 (DCPGH) and 136–139 (NKCD) each bind GTP. The segment at 136–139 (NKCD) is G4. A G5 region spans residues 174 to 176 (SGL).

It belongs to the TRAFAC class translation factor GTPase superfamily. Classic translation factor GTPase family. EF-Tu/EF-1A subfamily. As to quaternary structure, monomer.

The protein resides in the cytoplasm. The catalysed reaction is GTP + H2O = GDP + phosphate + H(+). In terms of biological role, GTP hydrolase that promotes the GTP-dependent binding of aminoacyl-tRNA to the A-site of ribosomes during protein biosynthesis. The polypeptide is Elongation factor Tu (Prochlorococcus marinus (strain MIT 9215)).